The primary structure comprises 621 residues: MGLLSDPVRRRALARIVLRLNTPLCVLSYVAGIAWFLALAFPPLTQRTYMSENAMGSTMVEEQFVGGDRARSFARDFAAHRKKPGALPVAWLERSMRSVGLEVYTQSFSRKLPFPDETHERYMVSGTNVYGILRAPRSASTESLVLTVPCGPDATNSQAVGLLLALAAHFRGQIYWAKDIIFLVTDHDLLGTEAWLEAYHDINVTGIQSSPLQGRAGAIQAAVALELSSDVVTSLDVTVEGLNGQLPNLDLLNLFQTFCQKGGLLCTLQGKLQPQDWTSLEGPLQGLQTLLLMVLRQASGRPHGPHGLFLRYGVEALTLRGINSFRQYKYDLATVGKALEGMFRKLNHLLERLHQSFFFYLLPALSRFVSIGLYMPATGFLLLVLGLKALELWMQLHQAGVNPEEAGKAPSPGTPLLPTQGVGLASLTAPLLISQAMGLALYFLPVLGQHLATQHFPVAEAEAVVLTLLAIYVAGLALPHNTHRVVNSQVPDRGWMALKLVALIYLALQLGCIALLNFSLGFLLAATMVPAAALAKPHGPRTLYAALLVVTSPAVTLFGSLFLWRELLEVPLSLAEGWQLFLTALAQGVLEHYTYGALLFPILALGLYPCWLLFWNVLFWK.

At 1–19 (MGLLSDPVRRRALARIVLR) the chain is on the cytoplasmic side. Residues 20-41 (LNTPLCVLSYVAGIAWFLALAF) traverse the membrane as a helical segment. At 42 to 370 (PPLTQRTYMS…LLPALSRFVS (329 aa)) the chain is on the lumenal side. The a 2-acyl-6-[6-phosphoethanolamine-alpha-D-mannosyl-(1-&gt;2)-6-phosphoethanolamine-alpha-D-mannosyl-(1-&gt;6)-2-phosphoethanolamine-alpha-D-mannosyl-(1-&gt;4)-alpha-D-glucosaminyl]-1-(1-radyl,2-acyl-sn-glycero-3-phospho)-1D-myo-inositol site is built by Tyr-49 and Ser-51. An N-linked (GlcNAc...) asparagine glycan is attached at Asn-203. Cys-259 and Cys-266 are disulfide-bonded. The a 2-acyl-6-[6-phosphoethanolamine-alpha-D-mannosyl-(1-&gt;2)-6-phosphoethanolamine-alpha-D-mannosyl-(1-&gt;6)-2-phosphoethanolamine-alpha-D-mannosyl-(1-&gt;4)-alpha-D-glucosaminyl]-1-(1-radyl,2-acyl-sn-glycero-3-phospho)-1D-myo-inositol site is built by His-354, Gln-355, and Ser-356. A Mg(2+)-binding site is contributed by Gln-355. A helical transmembrane segment spans residues 371-393 (IGLYMPATGFLLLVLGLKALELW). At 394 to 425 (MQLHQAGVNPEEAGKAPSPGTPLLPTQGVGLA) the chain is on the cytoplasmic side. Residues 426–450 (SLTAPLLISQAMGLALYFLPVLGQH) form a helical membrane-spanning segment. Topologically, residues 451–462 (LATQHFPVAEAE) are lumenal. The chain crosses the membrane as a helical span at residues 463-483 (AVVLTLLAIYVAGLALPHNTH). Topologically, residues 484 to 495 (RVVNSQVPDRGW) are cytoplasmic. 2 consecutive transmembrane segments (helical) span residues 496–519 (MALK…LNFS) and 520–536 (LGFL…ALAK). At 537–540 (PHGP) the chain is on the cytoplasmic side. A helical membrane pass occupies residues 541–563 (RTLYAALLVVTSPAVTLFGSLFL). The Lumenal segment spans residues 564-597 (WRELLEVPLSLAEGWQLFLTALAQGVLEHYTYGA). A helical transmembrane segment spans residues 598-619 (LLFPILALGLYPCWLLFWNVLF). Over 620–621 (WK) the chain is Cytoplasmic.

As to quaternary structure, heteropentamer. Part of the GPI-anchor transamidase complex, consisting of PIGK, PIGT, PIGS, PIGU and GAA1. Interacts with PIGK. As to expression, ubiquitously expressed in fetal and adult tissues. Expressed at higher levels in fetal tissues than adult tissues. In embryos abundant in the choroid plexus, skeletal muscle,.

The protein localises to the endoplasmic reticulum membrane. Its pathway is glycolipid biosynthesis; glycosylphosphatidylinositol-anchor biosynthesis. Functionally, component of the glycosylphosphatidylinositol-anchor (GPI-anchor) transamidase (GPI-T) complex that catalyzes the formation of the linkage between a proprotein and a GPI-anchor and participates in GPI anchored protein biosynthesis. Binds GPI-anchor. The protein is GPI-anchor transamidase component GPAA1 of Mus musculus (Mouse).